The sequence spans 697 residues: Hormonally up-regulated neu tumor-associated kinase homolog (697 aa).

The 259-residue stretch at Tyr55–Leu313 folds into the Protein kinase domain. ATP-binding positions include Leu61–Val69 and Lys84. Asp179 (proton acceptor) is an active-site residue. Composition is skewed to basic and acidic residues over residues Lys405–Glu424 and Pro460–Ser473. Disordered regions lie at residues Lys405 to Phe480 and Asp586 to Arg642. Residues Asp586–Phe600 show a composition bias toward polar residues. A compositionally biased stretch (low complexity) spans Ser607–Ser626. The segment covering Cys627–Ser637 has biased composition (polar residues).

This sequence belongs to the protein kinase superfamily. CAMK Ser/Thr protein kinase family. SNF1 subfamily.

The catalysed reaction is L-seryl-[protein] + ATP = O-phospho-L-seryl-[protein] + ADP + H(+). It catalyses the reaction L-threonyl-[protein] + ATP = O-phospho-L-threonyl-[protein] + ADP + H(+). The sequence is that of Hormonally up-regulated neu tumor-associated kinase homolog (hunk) from Xenopus tropicalis (Western clawed frog).